Reading from the N-terminus, the 635-residue chain is Cationic amino acid transporter 4 (635 aa).

3 consecutive transmembrane segments (helical) span residues 42-62, 66-86, and 113-133; these read LTLL…TGAV, VAGP…LLAA, and LWAF…GAAV. N-linked (GlcNAc...) asparagine glycosylation is found at asparagine 151 and asparagine 195. The chain crosses the membrane as a helical span at residues 197 to 217; sequence TFSAISLLVILFIVILGFILA. Asparagine 221 is a glycosylation site (N-linked (GlcNAc...) asparagine). A run of 5 helical transmembrane segments spans residues 229–249, 270–290, 318–338, 365–385, and 391–411; these read FAPF…YAFV, LAIA…STVL, GFIV…SLLF, QVPV…ALLL, and VQFL…SIIV. 2 positions are modified to phosphoserine: serine 422 and serine 427. Residues 478-498 form a helical membrane-spanning segment; the sequence is VTWALGVMLASAITIGCVLVF. An N-linked (GlcNAc...) asparagine glycan is attached at asparagine 500. Helical transmembrane passes span 508–528, 539–559, and 567–587; these read WGYI…LLVL, LFQI…NICL, and TWVR…GYGI. An N-linked (GlcNAc...) asparagine glycan is attached at asparagine 601.

The protein belongs to the amino acid-polyamine-organocation (APC) superfamily. Cationic amino acid transporter (CAT) (TC 2.A.3.3) family.

It localises to the membrane. In terms of biological role, involved in the transport of the cationic amino acids (arginine, lysine and ornithine). The protein is Cationic amino acid transporter 4 (SLC7A4) of Homo sapiens (Human).